A 211-amino-acid chain; its full sequence is Large ribosomal subunit protein bL25 (211 aa).

The protein belongs to the bacterial ribosomal protein bL25 family. CTC subfamily. In terms of assembly, part of the 50S ribosomal subunit; part of the 5S rRNA/L5/L18/L25 subcomplex. Contacts the 5S rRNA. Binds to the 5S rRNA independently of L5 and L18.

In terms of biological role, this is one of the proteins that binds to the 5S RNA in the ribosome where it forms part of the central protuberance. The polypeptide is Large ribosomal subunit protein bL25 (Xanthomonas axonopodis pv. citri (strain 306)).